Here is a 243-residue protein sequence, read N- to C-terminus: MQATAIIAASGIGKRMQLREGESKQLLEVGGFPVIYHTLKAFQMASSVKAIYIATRLENRSILEELAAASGFSKLKAIIEGGKERQDSVYNCIRAIEEEKRLTGASAEIILVHDGARPFIRSEEIDEIARLSMQYGACVPANRPKDTIKYVGENPEFFGETLDRSKLLQVQTPQGFQSNLLIQAHEQAELEGWYATDDAALVERFFPEQPVKIFETGYHNIKITTPEDIPVAEAIFSQISTRS.

This sequence belongs to the IspD/TarI cytidylyltransferase family. IspD subfamily.

It catalyses the reaction 2-C-methyl-D-erythritol 4-phosphate + CTP + H(+) = 4-CDP-2-C-methyl-D-erythritol + diphosphate. The protein operates within isoprenoid biosynthesis; isopentenyl diphosphate biosynthesis via DXP pathway; isopentenyl diphosphate from 1-deoxy-D-xylulose 5-phosphate: step 2/6. Functionally, catalyzes the formation of 4-diphosphocytidyl-2-C-methyl-D-erythritol from CTP and 2-C-methyl-D-erythritol 4-phosphate (MEP). The sequence is that of 2-C-methyl-D-erythritol 4-phosphate cytidylyltransferase from Pelodictyon phaeoclathratiforme (strain DSM 5477 / BU-1).